The following is a 169-amino-acid chain: Transcription antitermination protein NusB (169 aa).

The disordered stretch occupies residues 1-20 (MAESSNKPFRGPVRANDRKA).

Belongs to the NusB family.

Involved in transcription antitermination. Required for transcription of ribosomal RNA (rRNA) genes. Binds specifically to the boxA antiterminator sequence of the ribosomal RNA (rrn) operons. This Bradyrhizobium sp. (strain BTAi1 / ATCC BAA-1182) protein is Transcription antitermination protein NusB.